Consider the following 200-residue polypeptide: Large ribosomal subunit protein uL4 (200 aa).

The tract at residues 43–71 (RAQKTRAEVSGSGKKPWRQKGTGRARSGD) is disordered.

Belongs to the universal ribosomal protein uL4 family. Part of the 50S ribosomal subunit.

In terms of biological role, one of the primary rRNA binding proteins, this protein initially binds near the 5'-end of the 23S rRNA. It is important during the early stages of 50S assembly. It makes multiple contacts with different domains of the 23S rRNA in the assembled 50S subunit and ribosome. Functionally, forms part of the polypeptide exit tunnel. The chain is Large ribosomal subunit protein uL4 from Histophilus somni (strain 2336) (Haemophilus somnus).